A 93-amino-acid polypeptide reads, in one-letter code: Envelope small membrane protein (93 aa).

Topologically, residues 1 to 11 (MMNLLNKSLEE) are virion surface. The chain crosses the membrane as a helical span at residues 12–32 (NGSVLTAFYIFVAFVALYLLG). Residues 33–93 (RALQAFVQAA…NEFPKNGWKQ (61 aa)) lie on the Intravirion side of the membrane.

It belongs to the gammacoronaviruses E protein family. In terms of assembly, homooligomer. Interacts with the M membrane protein in the budding compartment of the host cell, which is located between endoplasmic reticulum and the Golgi complex. The cytoplasmic tails of both proteins are important for this function. Interacts with Nucleoprotein.

It localises to the host Golgi apparatus membrane. Functionally, plays a central role in virus morphogenesis and assembly. Acts as a viroporin and self-assembles in host membranes forming pentameric protein-lipid pores that allow ion transport. Also plays a role in the induction of apoptosis. The polypeptide is Envelope small membrane protein (Avian infectious bronchitis virus (strain Portugal/322/82) (IBV)).